Reading from the N-terminus, the 305-residue chain is Polyamine aminopropyltransferase 2 (305 aa).

The PABS domain maps to 7-242; that stretch reads WRFVAEWTSE…GLWGFVAASD (236 aa). Gln-36 provides a ligand contact to S-methyl-5'-thioadenosine. His-67 and Glu-91 together coordinate spermidine. Residues Asp-111 and 143–144 contribute to the S-methyl-5'-thioadenosine site; that span reads DG. Asp-161 serves as the catalytic Proton acceptor. S-methyl-5'-thioadenosine is bound at residue Pro-170.

It belongs to the spermidine/spermine synthase family. As to quaternary structure, homodimer or homotetramer.

Its subcellular location is the cytoplasm. The enzyme catalyses S-adenosyl 3-(methylsulfanyl)propylamine + propane-1,3-diamine = norspermidine + S-methyl-5'-thioadenosine + H(+). Involved in the biosynthesis of polyamines which are thought to support the growth of thermophilic microorganisms under high-temperature conditions. It seems that long-chain and branched-chain of polyamines effectively stabilize DNA and RNA, respectively. Catalyzes the irreversible transfer of a propylamine group from the amino donor S-adenosylmethioninamine (decarboxy-AdoMet) to 1,3-diaminopropane to yield sym-norspermidine (bis(3-aminopropyl)amine). It can also synthesize thermospermine from spermidine with a very low activity. The chain is Polyamine aminopropyltransferase 2 from Hyperthermus butylicus (strain DSM 5456 / JCM 9403 / PLM1-5).